Reading from the N-terminus, the 693-residue chain is Elongation factor G (693 aa).

The 275-residue stretch at 8-282 (EKTRNIGIMA…AVIDYLPSPL (275 aa)) folds into the tr-type G domain. GTP contacts are provided by residues 17–24 (AHVDAGKT), 81–85 (DTPGH), and 135–138 (NKMD).

Belongs to the TRAFAC class translation factor GTPase superfamily. Classic translation factor GTPase family. EF-G/EF-2 subfamily.

It is found in the cytoplasm. In terms of biological role, catalyzes the GTP-dependent ribosomal translocation step during translation elongation. During this step, the ribosome changes from the pre-translocational (PRE) to the post-translocational (POST) state as the newly formed A-site-bound peptidyl-tRNA and P-site-bound deacylated tRNA move to the P and E sites, respectively. Catalyzes the coordinated movement of the two tRNA molecules, the mRNA and conformational changes in the ribosome. The chain is Elongation factor G from Streptococcus pneumoniae (strain Hungary19A-6).